A 318-amino-acid chain; its full sequence is Coproporphyrin III ferrochelatase (318 aa).

Fe(2+) is bound by residues His186 and Glu268.

Belongs to the ferrochelatase family.

The protein localises to the cytoplasm. The enzyme catalyses Fe-coproporphyrin III + 2 H(+) = coproporphyrin III + Fe(2+). The protein operates within porphyrin-containing compound metabolism; protoheme biosynthesis. Its function is as follows. Involved in coproporphyrin-dependent heme b biosynthesis. Catalyzes the insertion of ferrous iron into coproporphyrin III to form Fe-coproporphyrin III. The protein is Coproporphyrin III ferrochelatase of Lactococcus lactis subsp. cremoris (strain MG1363).